The sequence spans 242 residues: UPF0309 protein BMEA_B0892 (242 aa).

Residues 30–214 (AADLIAAAAR…ARLVGEGDAP (185 aa)) enclose the SIS domain.

Belongs to the UPF0309 family.

This Brucella melitensis biotype 2 (strain ATCC 23457) protein is UPF0309 protein BMEA_B0892.